The following is a 443-amino-acid chain: Chromosome partition protein MukF (443 aa).

Positions 209–237 (LDETSGNLRELQDTLNAAGDKLQAQLLRI) are leucine-zipper.

Belongs to the MukF family. In terms of assembly, interacts, and probably forms a ternary complex, with MukE and MukB via its C-terminal region. The complex formation is stimulated by calcium or magnesium. It is required for an interaction between MukE and MukB.

The protein localises to the cytoplasm. It localises to the nucleoid. Functionally, involved in chromosome condensation, segregation and cell cycle progression. May participate in facilitating chromosome segregation by condensation DNA from both sides of a centrally located replisome during cell division. Not required for mini-F plasmid partitioning. Probably acts via its interaction with MukB and MukE. Overexpression results in anucleate cells. It has a calcium binding activity. In Actinobacillus pleuropneumoniae serotype 7 (strain AP76), this protein is Chromosome partition protein MukF.